The following is a 234-amino-acid chain: Opacity protein opA55 (234 aa).

A signal peptide is located at residue A1.

This sequence belongs to the opacity porin family.

The protein resides in the cell outer membrane. Implicated in a number of adherence functions. OPA proteins are implicated in pathogenesis and are subject to phase variation. The chain is Opacity protein opA55 (opaE) from Neisseria gonorrhoeae.